Consider the following 444-residue polypeptide: Na(+)/H(+) antiporter NhaA 2 (444 aa).

11 consecutive transmembrane segments (helical) span residues 21–41, 64–84, 102–122, 131–151, 160–180, 185–205, 212–232, 307–327, 342–362, 377–397, and 413–433; these read FSGI…NSPF, FSIH…MVGL, AFPV…YYVL, GFGI…LLLG, VFLV…IAVF, EGLH…LTGI, HLGV…HSGI, ALQP…NAGV, LGVI…LTFL, WSHI…SMFV, and IAIL…LIIN.

Belongs to the NhaA Na(+)/H(+) (TC 2.A.33) antiporter family.

It is found in the cell inner membrane. It catalyses the reaction Na(+)(in) + 2 H(+)(out) = Na(+)(out) + 2 H(+)(in). Functionally, na(+)/H(+) antiporter that extrudes sodium in exchange for external protons. This chain is Na(+)/H(+) antiporter NhaA 2, found in Helicobacter hepaticus (strain ATCC 51449 / 3B1).